A 308-amino-acid polypeptide reads, in one-letter code: Phosphate transport system permease protein PstA 1 (308 aa).

6 helical membrane-spanning segments follow: residues 36–56 (FFFT…WVVI), 96–116 (AGVA…YLVE), 132–152 (VLAG…WIAT), 155–175 (FQQS…PVVV), 204–224 (IVRI…LLSI), and 276–296 (WGAA…AAMI). Positions 89-297 (LYGTLVQAGV…TINLAAAMIR (209 aa)) constitute an ABC transmembrane type-1 domain.

The protein belongs to the binding-protein-dependent transport system permease family. CysTW subfamily. In terms of assembly, the complex is composed of two ATP-binding proteins (PstB), two transmembrane proteins (PstC and PstA) and a solute-binding protein (PstS).

The protein localises to the cell membrane. Its function is as follows. Part of the binding-protein-dependent transport system for phosphate; probably responsible for the translocation of the substrate across the membrane. The protein is Phosphate transport system permease protein PstA 1 (pstA1) of Mycobacterium tuberculosis (strain ATCC 25618 / H37Rv).